A 545-amino-acid polypeptide reads, in one-letter code: CTP synthase (545 aa).

An amidoligase domain region spans residues 1–266; that stretch reads MTTNYIFVTG…DDYICKRFSL (266 aa). Ser-14 lines the CTP pocket. Residue Ser-14 participates in UTP binding. Residues 15 to 20 and Asp-72 contribute to the ATP site; that span reads SLGKGI. The Mg(2+) site is built by Asp-72 and Glu-140. Residues 147–149, 187–192, and Lys-223 each bind CTP; these read DIE and KTKPTQ. Residues 187 to 192 and Lys-223 contribute to the UTP site; that span reads KTKPTQ. 239–241 provides a ligand contact to ATP; the sequence is KDV. The region spanning 291–542 is the Glutamine amidotransferase type-1 domain; the sequence is TIGMVGKYIE…VKAASEYQKR (252 aa). Residue Gly-352 participates in L-glutamine binding. Cys-379 (nucleophile; for glutamine hydrolysis) is an active-site residue. L-glutamine contacts are provided by residues 380–383, Glu-403, and Arg-470; that span reads LGMQ. Residues His-515 and Glu-517 contribute to the active site.

This sequence belongs to the CTP synthase family. Homotetramer.

It carries out the reaction UTP + L-glutamine + ATP + H2O = CTP + L-glutamate + ADP + phosphate + 2 H(+). The catalysed reaction is L-glutamine + H2O = L-glutamate + NH4(+). The enzyme catalyses UTP + NH4(+) + ATP = CTP + ADP + phosphate + 2 H(+). The protein operates within pyrimidine metabolism; CTP biosynthesis via de novo pathway; CTP from UDP: step 2/2. Its activity is regulated as follows. Allosterically activated by GTP, when glutamine is the substrate; GTP has no effect on the reaction when ammonia is the substrate. The allosteric effector GTP functions by stabilizing the protein conformation that binds the tetrahedral intermediate(s) formed during glutamine hydrolysis. Inhibited by the product CTP, via allosteric rather than competitive inhibition. Catalyzes the ATP-dependent amination of UTP to CTP with either L-glutamine or ammonia as the source of nitrogen. Regulates intracellular CTP levels through interactions with the four ribonucleotide triphosphates. This is CTP synthase from Enterobacter sp. (strain 638).